Here is a 194-residue protein sequence, read N- to C-terminus: Lymphocyte antigen 6 complex locus protein G5b (194 aa).

The signal sequence occupies residues 1–18 (MRARVLVGMLTMVGFAMG). The UPAR/Ly6 domain maps to 26–118 (RTCHLCLLED…SAQHQSTLRG (93 aa)). Intrachain disulfides connect Cys-28/Cys-55, Cys-31/Cys-40, Cys-47/Cys-73, Cys-81/Cys-98, and Cys-99/Cys-104. Asn-63 carries an N-linked (GlcNAc...) asparagine glycan. The N-linked (GlcNAc...) asparagine glycan is linked to Asn-141.

In terms of assembly, monomer. N-glycosylated.

Its subcellular location is the secreted. This is Lymphocyte antigen 6 complex locus protein G5b (Ly6g5b) from Mus musculus (Mouse).